Reading from the N-terminus, the 295-residue chain is Bifunctional protein FolD (295 aa).

NADP(+) contacts are provided by residues 166–168 (GRS), Ser-195, and Ile-236.

It belongs to the tetrahydrofolate dehydrogenase/cyclohydrolase family. As to quaternary structure, homodimer.

It carries out the reaction (6R)-5,10-methylene-5,6,7,8-tetrahydrofolate + NADP(+) = (6R)-5,10-methenyltetrahydrofolate + NADPH. It catalyses the reaction (6R)-5,10-methenyltetrahydrofolate + H2O = (6R)-10-formyltetrahydrofolate + H(+). Its pathway is one-carbon metabolism; tetrahydrofolate interconversion. In terms of biological role, catalyzes the oxidation of 5,10-methylenetetrahydrofolate to 5,10-methenyltetrahydrofolate and then the hydrolysis of 5,10-methenyltetrahydrofolate to 10-formyltetrahydrofolate. The chain is Bifunctional protein FolD from Chlorobium phaeobacteroides (strain DSM 266 / SMG 266 / 2430).